Here is a 378-residue protein sequence, read N- to C-terminus: Heterogeneous nuclear ribonucleoprotein A3 (378 aa).

Methionine 1 is modified (N-acetylmethionine). A compositionally biased stretch (pro residues) spans 1–10 (MEVKPPPGRP). A disordered region spans residues 1–34 (MEVKPPPGRPQPDSGRRRRRRGEEGHDPKEPEQL). Residue lysine 4 forms a Glycyl lysine isopeptide (Lys-Gly) (interchain with G-Cter in SUMO2) linkage. Phosphoserine is present on serine 14. Residues 21-34 (RGEEGHDPKEPEQL) show a composition bias toward basic and acidic residues. Residues 35–118 (RKLFIGGLSF…RAVSREDSVK (84 aa)) enclose the RRM 1 domain. Residue lysine 36 forms a Glycyl lysine isopeptide (Lys-Gly) (interchain with G-Cter in SUMO2) linkage. Serine 43 carries the post-translational modification Phosphoserine. Arginine 52 bears the Dimethylated arginine; alternate mark. Residue arginine 52 is modified to Omega-N-methylarginine; alternate. Arginine 76 bears the Omega-N-methylarginine mark. Residues serine 112 and serine 116 each carry the phosphoserine modification. Residue lysine 118 forms a Glycyl lysine isopeptide (Lys-Gly) (interchain with G-Cter in SUMO2) linkage. Threonine 124 carries the phosphothreonine modification. The RRM 2 domain occupies 126 to 205 (KKIFVGGIKE…CEVKKALSKQ (80 aa)). Lysine 134 carries the post-translational modification N6-acetyllysine; alternate. Lysine 134 participates in a covalent cross-link: Glycyl lysine isopeptide (Lys-Gly) (interchain with G-Cter in SUMO2); alternate. Glycyl lysine isopeptide (Lys-Gly) (interchain with G-Cter in SUMO2) cross-links involve residues lysine 151 and lysine 182. Residues 204 to 225 (KQEMQSAGSQRGRGGGSGNFMG) form a disordered region. Arginine 214, arginine 216, arginine 226, arginine 239, and arginine 246 each carry omega-N-methylarginine; alternate. Asymmetric dimethylarginine; alternate occurs at positions 214, 216, 226, 239, and 246. Residues 214–225 (RGRGGGSGNFMG) show a composition bias toward gly residues. Residue arginine 257 is modified to Omega-N-methylarginine. An Asymmetric dimethylarginine modification is found at arginine 286. The segment at 336 to 378 (SGQQQSNYGPMKGGSFGGRSSGSPYGGGYGSGGGSGGYGSRRF) is disordered. The segment covering 346–378 (MKGGSFGGRSSGSPYGGGYGSGGGSGGYGSRRF) has biased composition (gly residues). The residue at position 350 (serine 350) is a Phosphoserine. At arginine 354 the chain carries Omega-N-methylarginine. Residue serine 358 is modified to Phosphoserine. Tyrosine 360 and tyrosine 364 each carry phosphotyrosine. Residues serine 366 and serine 370 each carry the phosphoserine modification. Residue tyrosine 373 is modified to Phosphotyrosine. Serine 375 carries the phosphoserine modification.

In terms of assembly, identified in the spliceosome C complex.

It localises to the nucleus. Functionally, plays a role in cytoplasmic trafficking of RNA. Binds to the cis-acting response element, A2RE. May be involved in pre-mRNA splicing. The chain is Heterogeneous nuclear ribonucleoprotein A3 (HNRNPA3) from Homo sapiens (Human).